A 624-amino-acid chain; its full sequence is Galactan 5-O-arabinofuranosyltransferase (624 aa).

The next 13 helical transmembrane spans lie at 5–25 (VLGQ…VAIA), 43–63 (ALTT…GLLW), 73–93 (LGAL…PLGA), 127–147 (IGLP…IAAA), 159–179 (WSIV…AAMI), 181–201 (FEYA…YAST), 203–223 (PYAA…WAGL), 234–254 (AIVG…LLLV), 280–300 (LAVI…PYLL), 326–346 (FPMF…VWLV), 355–375 (AGAL…SMLT), 391–411 (LTVL…LAIA), and 422–442 (VVAA…QDIP).

The protein belongs to the glycosyltransferase 85 family.

It is found in the cell membrane. The catalysed reaction is Adds an alpha-D-arabinofuranosyl group from trans,octacis-decaprenylphospho-beta-D-arabinofuranose at the 5-O-position of the eighth, tenth and twelfth galactofuranose unit of the galactofuranan chain of [beta-D-galactofuranosyl-(1-&gt;5)-beta-D-galactofuranosyl-(1-&gt;6)]14-beta-D-galactofuranosyl-(1-&gt;5)-beta-D-galactofuranosyl-(1-&gt;4)-alpha-L-rhamnopyranosyl-(1-&gt;3)-N-acetyl-alpha-D-glucosaminyl-diphospho-trans,octacis-decaprenol.. It functions in the pathway cell wall biogenesis; cell wall polysaccharide biosynthesis. Its function is as follows. Involved in the biosynthesis of the arabinogalactan (AG) region of the mycolylarabinogalactan-peptidoglycan (mAGP) complex, an essential component of the mycobacterial cell wall. Catalyzes the addition of the first key arabinofuranosyl (Araf) residue from the sugar donor decaprenyl-phospho-arabinose (DPA) on the C-5 of a 6-linked galactofuranosyl (Galf) of the galactan domain, thus 'priming' the galactan for further elaboration by other arabinofuranosyltransferases. It is not able to add an Araf residue to a terminal Galf. The polypeptide is Galactan 5-O-arabinofuranosyltransferase (Mycolicibacterium smegmatis (strain ATCC 700084 / mc(2)155) (Mycobacterium smegmatis)).